The primary structure comprises 1065 residues: Inversin (1065 aa).

ANK repeat units follow at residues 13 to 42 (SLAS…ALKD), 47 to 76 (FGRT…DVNK), 80 to 110 (SQRT…WMQK), 113 to 144 (EEMT…EVDT), 148 to 177 (NKQT…NIGI), 181 to 213 (EGKI…TESL), 220 to 250 (EGRT…NITS), 254 to 283 (LFRT…SGTI), 288 to 317 (QGAT…VKDD), 321 to 350 (EGRT…DIDI), 356 to 385 (YGGT…QVDA), 389 to 418 (MKHT…RVDL), 422 to 451 (DGHS…NPNV), 455 to 484 (AGRT…DPNI), 488 to 517 (EGRT…FPNQ), and 523 to 553 (ERYT…SIAA). Asn-75 is modified (3-hydroxyasparagine). Residues 490-498 (RTALHWSCN) carry the D-box 1 motif. The IQ 1 domain occupies 555–584 (QDIAAFKIQAVYKGYKVRKAFRDRKNLLMK). The span at 589 to 616 (RKDAAAKKREEENKRKEAEQQKGRRSPD) shows a compositional bias: basic and acidic residues. 2 disordered regions span residues 589–833 (RKDA…TPRN) and 847–886 (HLPQ…PLSG). Positions 627 to 640 (PSTQDVPSRQSRAP) are enriched in polar residues. Ser-661 is subject to Phosphoserine. Over residues 677–686 (SSDLQGTNSR) the composition is skewed to polar residues. 6 stretches are compositionally biased toward basic and acidic residues: residues 687–697 (RPNETAREHSK), 706–715 (RPNEGSDGSR), 723–736 (EKSR…ERCA), 752–762 (GPDEKGEDSRR), 770–786 (HDSH…EPKA), and 853–863 (EELRSGARRLE). The D-box 2 motif lies at 909–917 (RKELFRKKN). An IQ 2 domain is found at 916-945 (KNKAAAVIQRAWRSYQLRKHLSHLRHMKQL). Residues 976–999 (TTAVSKAPKSPSKGTSGTKSTKHS) are disordered. Residues 983–994 (PKSPSKGTSGTK) are compositionally biased toward low complexity.

As to quaternary structure, binds calmodulin via its IQ domains. Interacts with APC2. Interacts with alpha-, beta-, and gamma-catenin. Interacts with N-cadherin (CDH2). Interacts with microtubules. Interacts with NPHP1. Interacts with DVL1, PRICKLE (PRICKLE1 or PRICKLE2) and Strabismus (VANGL1 or VANGL2). Interacts with IQCB1; the interaction likely requires additional interactors. Component of a complex containing at least ANKS6, INVS, NEK8 and NPHP3. ANKS6 may organize complex assembly by linking INVS and NPHP3 to NEK8 and INVS may target the complex to the proximal ciliary axoneme. May be ubiquitinated via its interaction with APC2. Post-translationally, hydroxylated at Asn-75, most probably by HIF1AN. In terms of tissue distribution, widely expressed. Strongly expressed in the primary cilia of renal tubular cells.

Its subcellular location is the cytoplasm. It localises to the cytoskeleton. It is found in the spindle. The protein localises to the membrane. The protein resides in the nucleus. Its subcellular location is the cell projection. It localises to the cilium. Its function is as follows. Required for normal renal development and establishment of left-right axis. Probably acts as a molecular switch between different Wnt signaling pathways. Inhibits the canonical Wnt pathway by targeting cytoplasmic disheveled (DVL1) for degradation by the ubiquitin-proteasome. This suggests that it is required in renal development to oppose the repression of terminal differentiation of tubular epithelial cells by Wnt signaling. Involved in the organization of apical junctions in kidney cells together with NPHP1, NPHP4 and RPGRIP1L/NPHP8. Does not seem to be strictly required for ciliogenesis. The chain is Inversin (INVS) from Homo sapiens (Human).